Reading from the N-terminus, the 96-residue chain is Large ribosomal subunit protein bL28 (96 aa).

The segment at 1–23 is disordered; it reads MSRVCELSGKAPMTGNTVSHANN.

The protein belongs to the bacterial ribosomal protein bL28 family.

This is Large ribosomal subunit protein bL28 from Cereibacter sphaeroides (strain ATCC 17029 / ATH 2.4.9) (Rhodobacter sphaeroides).